The sequence spans 226 residues: Ribose-5-phosphate isomerase A (226 aa).

Residues 28–31, 80–83, and 93–96 each bind substrate; these read TGST, DGAD, and KGGG. The Proton acceptor role is filled by Glu102. Lys120 lines the substrate pocket.

Belongs to the ribose 5-phosphate isomerase family. As to quaternary structure, homodimer.

It carries out the reaction aldehydo-D-ribose 5-phosphate = D-ribulose 5-phosphate. Its pathway is carbohydrate degradation; pentose phosphate pathway; D-ribose 5-phosphate from D-ribulose 5-phosphate (non-oxidative stage): step 1/1. In terms of biological role, catalyzes the reversible conversion of ribose-5-phosphate to ribulose 5-phosphate. The protein is Ribose-5-phosphate isomerase A of Caulobacter sp. (strain K31).